Here is a 155-residue protein sequence, read N- to C-terminus: Interferon gamma (155 aa).

The N-terminal stretch at 1 to 22 (MNATHCILALQLFLMAVSGCYC) is a signal peptide. N-linked (GlcNAc...) asparagine glycans are attached at residues Asn-38 and Asn-90.

The protein belongs to the type II (or gamma) interferon family. In terms of assembly, homodimer. Interacts with IFNGR1 (via extracellular domain); this interaction promotes IFNGR1 dimerization. Released primarily from activated T lymphocytes.

It is found in the secreted. Its function is as follows. Type II interferon produced by immune cells such as T-cells and NK cells that plays crucial roles in antimicrobial, antiviral, and antitumor responses by activating effector immune cells and enhancing antigen presentation. Primarily signals through the JAK-STAT pathway after interaction with its receptor IFNGR1 to affect gene regulation. Upon IFNG binding, IFNGR1 intracellular domain opens out to allow association of downstream signaling components JAK2, JAK1 and STAT1, leading to STAT1 activation, nuclear translocation and transcription of IFNG-regulated genes. Many of the induced genes are transcription factors such as IRF1 that are able to further drive regulation of a next wave of transcription. Plays a role in class I antigen presentation pathway by inducing a replacement of catalytic proteasome subunits with immunoproteasome subunits. In turn, increases the quantity, quality, and repertoire of peptides for class I MHC loading. Increases the efficiency of peptide generation also by inducing the expression of activator PA28 that associates with the proteasome and alters its proteolytic cleavage preference. Up-regulates as well MHC II complexes on the cell surface by promoting expression of several key molecules such as cathepsins B/CTSB, H/CTSH, and L/CTSL. Participates in the regulation of hematopoietic stem cells during development and under homeostatic conditions by affecting their development, quiescence, and differentiation. In Mus musculus (Mouse), this protein is Interferon gamma (Ifng).